The sequence spans 550 residues: Chaperonin GroEL (550 aa).

ATP is bound by residues 30–33, K51, 87–91, G415, 478–480, and D494; these read TLGP, DGTTT, and NAA.

Belongs to the chaperonin (HSP60) family. As to quaternary structure, forms a cylinder of 14 subunits composed of two heptameric rings stacked back-to-back. Interacts with the co-chaperonin GroES.

The protein resides in the cytoplasm. It catalyses the reaction ATP + H2O + a folded polypeptide = ADP + phosphate + an unfolded polypeptide.. Functionally, together with its co-chaperonin GroES, plays an essential role in assisting protein folding. The GroEL-GroES system forms a nano-cage that allows encapsulation of the non-native substrate proteins and provides a physical environment optimized to promote and accelerate protein folding. The chain is Chaperonin GroEL from Desulfosudis oleivorans (strain DSM 6200 / JCM 39069 / Hxd3) (Desulfococcus oleovorans).